The sequence spans 331 residues: Protoheme IX farnesyltransferase (331 aa).

8 helical membrane passes run 63–83, 109–129, 132–152, 160–180, 188–208, 215–235, 241–261, and 294–314; these read LACT…LNCL, SVFI…VSGV, LAAG…TAFL, IVFG…AAAG, WLFS…AILL, VGIP…AISV, VFLS…YGIL, and ILYM…VSIV.

This sequence belongs to the UbiA prenyltransferase family. Protoheme IX farnesyltransferase subfamily.

The protein resides in the cell inner membrane. It catalyses the reaction heme b + (2E,6E)-farnesyl diphosphate + H2O = Fe(II)-heme o + diphosphate. The protein operates within porphyrin-containing compound metabolism; heme O biosynthesis; heme O from protoheme: step 1/1. Functionally, converts heme B (protoheme IX) to heme O by substitution of the vinyl group on carbon 2 of heme B porphyrin ring with a hydroxyethyl farnesyl side group. The protein is Protoheme IX farnesyltransferase of Prochlorococcus marinus (strain NATL2A).